A 623-amino-acid polypeptide reads, in one-letter code: Scarecrow-like protein 22 (623 aa).

Disordered regions lie at residues 62–90 (RSPS…AAAA) and 179–203 (PNPG…QPGS). The span at 63-80 (SPSPFVSSSTTTLSSSHG) shows a compositional bias: low complexity. The GRAS domain maps to 235-622 (NDQDQSAVII…KELVTVSAWK (388 aa)). The tract at residues 242-311 (VIIDQLFSAA…ALHSLLQDSS (70 aa)) is leucine repeat I (LRI). A VHIID region spans residues 330–398 (YRAFSETSPF…SSAPSLKITA (69 aa)). The VHIID signature appears at 361–365 (IHIVD). Positions 413–448 (FTEENLRSFAGETGVSFEIELLNMEILLNPTYWPLS) are leucine repeat II (LRII). Residues 458–545 (IAVNLPISSM…RFCVQPSIQK (88 aa)) are PFYRE. The tract at residues 548 to 622 (TNRYRWMERS…KELVTVSAWK (75 aa)) is SAW.

The protein belongs to the GRAS family. In terms of tissue distribution, expressed in seedlings, roots, leaves and flowers.

It is found in the nucleus. In terms of biological role, probable transcription factor involved in plant development. The chain is Scarecrow-like protein 22 (SCL22) from Arabidopsis thaliana (Mouse-ear cress).